A 220-amino-acid polypeptide reads, in one-letter code: Small ribosomal subunit protein eS8 (220 aa).

The protein belongs to the eukaryotic ribosomal protein eS8 family.

The chain is Small ribosomal subunit protein eS8 (RPS8A) from Leishmania major.